A 363-amino-acid polypeptide reads, in one-letter code: Heme A synthase (363 aa).

A run of 8 helical transmembrane segments spans residues 21 to 41 (ALVRGWLYVVLLVLFALVLVG), 107 to 127 (RLLARSVGLVFALPLLFFWVS), 138 to 158 (LVGILLLGGLQGAIGWWMVAS), 174 to 194 (HLTLAALIFTATMVVARGLAP), 207 to 227 (LAGFIVLLALIQIYLGGLVAG), 268 to 288 (FVHRLGAYTVFAVALWHMIAT), 301 to 321 (ATLLFVLVLVQASIGIGTLLM), and 323 to 343 (VPLHMALTHQGFALIVLGFAA). Histidine 270 provides a ligand contact to heme. A heme-binding site is contributed by histidine 331.

It belongs to the COX15/CtaA family. Type 2 subfamily. As to quaternary structure, interacts with CtaB. The cofactor is heme b.

Its subcellular location is the cell membrane. It catalyses the reaction Fe(II)-heme o + 2 A + H2O = Fe(II)-heme a + 2 AH2. Its pathway is porphyrin-containing compound metabolism; heme A biosynthesis; heme A from heme O: step 1/1. Functionally, catalyzes the conversion of heme O to heme A by two successive hydroxylations of the methyl group at C8. The first hydroxylation forms heme I, the second hydroxylation results in an unstable dihydroxymethyl group, which spontaneously dehydrates, resulting in the formyl group of heme A. The chain is Heme A synthase from Mesorhizobium japonicum (strain LMG 29417 / CECT 9101 / MAFF 303099) (Mesorhizobium loti (strain MAFF 303099)).